The following is a 69-amino-acid chain: Pleurain-A4 (69 aa).

Residues 1–22 (MFTLKKTLLLLFFLGTISISLC) form the signal peptide. A propeptide spanning residues 23-43 (KQERDADEDDGRKMTEEEVKR) is cleaved from the precursor. Residues Cys-63 and Cys-69 are joined by a disulfide bond.

It belongs to the frog skin active peptide (FSAP) family. Pleurain subfamily. Expressed by the skin glands.

The protein localises to the secreted. Its function is as follows. Antimicrobial peptide. Has activity against Gram-positive and -negative bacteria, and fungi. Has little hemolytic activity on red blood cells. This is Pleurain-A4 from Nidirana pleuraden (Yunnan pond frog).